Consider the following 594-residue polypeptide: DEAD-box ATP-dependent RNA helicase 25 (594 aa).

Disordered stretches follow at residues 56–80 (RSGG…EEGL) and 92–121 (GVRE…VDGS). Residues 126–154 (TRFDQCTISPLSLKAVKDAGYERMTQVQE) carry the Q motif motif. Residues 157–340 (LPVILQGKDV…HIAMKKNYKF (184 aa)) enclose the Helicase ATP-binding domain. 170–177 (AKTGTGKT) lines the ATP pocket. The short motif at 288 to 291 (DEAD) is the DEAD box element. The Helicase C-terminal domain maps to 370–520 (ILYDVLKKHV…SVDSSTQTIV (151 aa)).

The protein belongs to the DEAD box helicase family.

The enzyme catalyses ATP + H2O = ADP + phosphate + H(+). This Oryza sativa subsp. japonica (Rice) protein is DEAD-box ATP-dependent RNA helicase 25.